A 331-amino-acid chain; its full sequence is Phosphoribosylformylglycinamidine cyclo-ligase (331 aa).

Belongs to the AIR synthase family.

It localises to the cytoplasm. The catalysed reaction is 2-formamido-N(1)-(5-O-phospho-beta-D-ribosyl)acetamidine + ATP = 5-amino-1-(5-phospho-beta-D-ribosyl)imidazole + ADP + phosphate + H(+). It participates in purine metabolism; IMP biosynthesis via de novo pathway; 5-amino-1-(5-phospho-D-ribosyl)imidazole from N(2)-formyl-N(1)-(5-phospho-D-ribosyl)glycinamide: step 2/2. This is Phosphoribosylformylglycinamidine cyclo-ligase from Clostridium tetani (strain Massachusetts / E88).